We begin with the raw amino-acid sequence, 298 residues long: Protoheme IX farnesyltransferase (298 aa).

The next 9 helical transmembrane spans lie at 26–46 (VVGHIVFTAIIGMFLAVPGVP), 52–72 (FWASLGIGFAAASAAALNHFL), 98–118 (VVGFALVLGIVAMAILIAFVN), 120–140 (LTAFLTFLSLIGYAVIYTVYL), 148–168 (IVIGGAAGAAPPVLGWCAVTG), 174–194 (ALLLFLLIFVWTPPHFWAYAI), 214–234 (IAFTQLHILLYTILLFLAGLM), 241–261 (SGEIYLAAALIFGGIFVYYAI), and 278–298 (YSLVYLVGIFSALLVDHYIVL).

It belongs to the UbiA prenyltransferase family. Protoheme IX farnesyltransferase subfamily.

It localises to the cell inner membrane. It carries out the reaction heme b + (2E,6E)-farnesyl diphosphate + H2O = Fe(II)-heme o + diphosphate. It functions in the pathway porphyrin-containing compound metabolism; heme O biosynthesis; heme O from protoheme: step 1/1. Functionally, converts heme B (protoheme IX) to heme O by substitution of the vinyl group on carbon 2 of heme B porphyrin ring with a hydroxyethyl farnesyl side group. In Methylococcus capsulatus (strain ATCC 33009 / NCIMB 11132 / Bath), this protein is Protoheme IX farnesyltransferase.